Consider the following 163-residue polypeptide: Olfactory marker protein (163 aa).

The residue at position 2 (Ala-2) is an N-acetylalanine.

This sequence belongs to the olfactory marker protein family. As to quaternary structure, interacts with BEX1 and BEX2. In terms of tissue distribution, uniquely associated with mature olfactory receptor neurons.

The protein localises to the cytoplasm. Its function is as follows. May act as a modulator of the olfactory signal-transduction cascade. The sequence is that of Olfactory marker protein (Omp) from Rattus norvegicus (Rat).